The sequence spans 257 residues: Outer membrane protein Omp26La (257 aa).

The N-terminal stretch at 1–19 is a signal peptide; sequence MKKIALFITASLIAGNTLA.

Belongs to the MipA/OmpV family.

The protein localises to the cell outer membrane. This is Outer membrane protein Omp26La from Vibrio anguillarum (Listonella anguillarum).